A 94-amino-acid chain; its full sequence is CRISPR-associated endoribonuclease Cas2 (94 aa).

A Mg(2+)-binding site is contributed by Asp-11.

This sequence belongs to the CRISPR-associated endoribonuclease Cas2 protein family. Homodimer, forms a heterotetramer with a Cas1 homodimer. Mg(2+) serves as cofactor.

In terms of biological role, CRISPR (clustered regularly interspaced short palindromic repeat), is an adaptive immune system that provides protection against mobile genetic elements (viruses, transposable elements and conjugative plasmids). CRISPR clusters contain sequences complementary to antecedent mobile elements and target invading nucleic acids. CRISPR clusters are transcribed and processed into CRISPR RNA (crRNA). Functions as a ssRNA-specific endoribonuclease. Involved in the integration of spacer DNA into the CRISPR cassette. This Thermus thermophilus (strain ATCC 27634 / DSM 579 / HB8) protein is CRISPR-associated endoribonuclease Cas2.